A 530-amino-acid chain; its full sequence is Capsid protein VP1 (530 aa).

The segment at 1–20 (MMMASKDATSSVDGASGAGQ) is disordered. The segment at 1-225 (MMMASKDATS…FLFLVPPTVE (225 aa)) is shell domain. Positions 226-278 (QKTRPFTLPNLPLSSLSNSRAPLPISSMGISPDNVQSVQFQNGRCTLDGRLVG) are P1 sub-domain 1. The interval 226 to 530 (QKTRPFTLPN…SARGRLGLRR (305 aa)) is protruding domain. The P2 sub-domain stretch occupies residues 279–405 (TTPVSLSHVA…GSSITEATHL (127 aa)). The tract at residues 406–530 (APSVYPPGFG…SARGRLGLRR (125 aa)) is P1 sub-domain 2. The plays a role in binding to host histo-blood group structures antigens and in the formation of P-particles stretch occupies residues 523–530 (RGRLGLRR).

This sequence belongs to the caliciviridae capsid protein family. Homodimer. Homomultimer. Interacts with the minor capsid protein VP2. Interacts (via C-terminus) with host type I histo-blood group structures antigens at the surface of target cells. In terms of processing, may be cleaved by host protease to generate soluble capsid protein. Assembled capsid cannot be cleaved.

Its subcellular location is the virion. It is found in the host cytoplasm. Capsid protein self assembles to form an icosahedral capsid with a T=3 symmetry, about 38 nm in diameter, and consisting of 180 capsid proteins. A smaller form of capsid with a diameter of 23 nm might be capsid proteins assembled as icosahedron with T=1 symmetry. The capsid encapsulates the genomic RNA and is decorated with VP2 proteins. Attaches virion to target cells by binding histo-blood group antigens (HBGAs) present on gastroduodenal epithelial cells. Functionally, the soluble capsid protein may play a role in viral immunoevasion. The chain is Capsid protein VP1 from Norovirus (strain Human/NoV/United States/Norwalk/1968/GI) (Hu/NV/NV/1968/US).